The primary structure comprises 514 residues: 2,3-bisphosphoglycerate-independent phosphoglycerate mutase (514 aa).

The Mn(2+) site is built by Asp14 and Ser64. The active-site Phosphoserine intermediate is the Ser64. Substrate-binding positions include His125, 155–156 (RD), Arg187, Arg193, 263–266 (RADR), and Lys336. Mn(2+) is bound by residues Asp403, His407, Asp444, His445, and His463.

It belongs to the BPG-independent phosphoglycerate mutase family. In terms of assembly, monomer. Mn(2+) serves as cofactor.

The enzyme catalyses (2R)-2-phosphoglycerate = (2R)-3-phosphoglycerate. Its pathway is carbohydrate degradation; glycolysis; pyruvate from D-glyceraldehyde 3-phosphate: step 3/5. Its function is as follows. Catalyzes the interconversion of 2-phosphoglycerate and 3-phosphoglycerate. The chain is 2,3-bisphosphoglycerate-independent phosphoglycerate mutase from Salmonella paratyphi B (strain ATCC BAA-1250 / SPB7).